The following is a 357-amino-acid chain: Fructose-bisphosphate aldolase (357 aa).

Residues Arg-49 and Lys-140 each contribute to the substrate site. Glu-183 serves as the catalytic Proton acceptor. The active-site Schiff-base intermediate with dihydroxyacetone-P is the Lys-225.

Belongs to the class I fructose-bisphosphate aldolase family.

It catalyses the reaction beta-D-fructose 1,6-bisphosphate = D-glyceraldehyde 3-phosphate + dihydroxyacetone phosphate. Its pathway is carbohydrate degradation; glycolysis; D-glyceraldehyde 3-phosphate and glycerone phosphate from D-glucose: step 4/4. This Dictyostelium discoideum (Social amoeba) protein is Fructose-bisphosphate aldolase (fba).